The sequence spans 850 residues: Ras GTPase-activating protein 2 (850 aa).

Residues 1 to 24 (MAAAAPAAAAASSEAPAASATAEP) are compositionally biased toward low complexity. The interval 1 to 32 (MAAAAPAAAAASSEAPAASATAEPEAGDQDSR) is disordered. Position 2 is an N-acetylalanine (Ala-2). 2 consecutive C2 domains span residues 20–138 (ATAE…ETWF) and 149–289 (VQGK…QAWY). In terms of domain architecture, Ras-GAP spans 372-589 (DKLVPFATAV…IAVKKFLDEI (218 aa)). Ser-555 is subject to Phosphoserine. In terms of domain architecture, PH spans 604–706 (VHLKEGEMYK…WIDVLCRVSR (103 aa)). The Btk-type zinc-finger motif lies at 708–744 (NQNRLSFYHPSVYLNGNWLCCQETGENTLGCKPCTAG). Residues His-716, Cys-727, Cys-728, and Cys-738 each contribute to the Zn(2+) site. The interval 825-850 (HEKYRKKRSSSAKYGSKENPIVGKAS) is disordered.

The protein localises to the cytoplasm. It localises to the perinuclear region. In terms of biological role, inhibitory regulator of the Ras-cyclic AMP pathway. Binds inositol tetrakisphosphate (IP4). This chain is Ras GTPase-activating protein 2 (RASA2), found in Homo sapiens (Human).